A 158-amino-acid chain; its full sequence is Probable cyclic pyranopterin monophosphate synthase (158 aa).

Residues 75–77 (MCH) and 111–112 (ME) contribute to the substrate site. The active site involves D126.

This sequence belongs to the MoaC family. As to quaternary structure, homohexamer; trimer of dimers.

The catalysed reaction is (8S)-3',8-cyclo-7,8-dihydroguanosine 5'-triphosphate = cyclic pyranopterin phosphate + diphosphate. It participates in cofactor biosynthesis; molybdopterin biosynthesis. Its function is as follows. Catalyzes the conversion of (8S)-3',8-cyclo-7,8-dihydroguanosine 5'-triphosphate to cyclic pyranopterin monophosphate (cPMP). This Methanocorpusculum labreanum (strain ATCC 43576 / DSM 4855 / Z) protein is Probable cyclic pyranopterin monophosphate synthase.